The following is a 71-amino-acid chain: Exodeoxyribonuclease 7 small subunit (71 aa).

It belongs to the XseB family. In terms of assembly, heterooligomer composed of large and small subunits.

Its subcellular location is the cytoplasm. The enzyme catalyses Exonucleolytic cleavage in either 5'- to 3'- or 3'- to 5'-direction to yield nucleoside 5'-phosphates.. Bidirectionally degrades single-stranded DNA into large acid-insoluble oligonucleotides, which are then degraded further into small acid-soluble oligonucleotides. In Streptococcus suis (strain 98HAH33), this protein is Exodeoxyribonuclease 7 small subunit.